We begin with the raw amino-acid sequence, 85 residues long: U1-theraphotoxin-Hs1a (85 aa).

The N-terminal stretch at 1–22 (MKVTLIAILTCAAVLVLHTTAA) is a signal peptide. The propeptide occupies 23 to 48 (EELEAESQLMEVGMPDTELAAVDEER). Intrachain disulfides connect C52/C66, C56/C77, and C71/C82.

As to quaternary structure, heterodimer composed of the two variants Ile-58 and Gln-58. Expressed by the venom gland.

Its subcellular location is the secreted. In terms of biological role, lethal neurotoxin that blocks neuromuscular transmission. Acts cooperatively to potentiate the activity of huwentoxin-I. This toxin is active against insects. This Cyriopagopus schmidti (Chinese bird spider) protein is U1-theraphotoxin-Hs1a.